Reading from the N-terminus, the 420-residue chain is Gamma-glutamyl phosphate reductase (420 aa).

The protein belongs to the gamma-glutamyl phosphate reductase family.

It is found in the cytoplasm. It catalyses the reaction L-glutamate 5-semialdehyde + phosphate + NADP(+) = L-glutamyl 5-phosphate + NADPH + H(+). It participates in amino-acid biosynthesis; L-proline biosynthesis; L-glutamate 5-semialdehyde from L-glutamate: step 2/2. Its function is as follows. Catalyzes the NADPH-dependent reduction of L-glutamate 5-phosphate into L-glutamate 5-semialdehyde and phosphate. The product spontaneously undergoes cyclization to form 1-pyrroline-5-carboxylate. This is Gamma-glutamyl phosphate reductase from Chlorobaculum parvum (strain DSM 263 / NCIMB 8327) (Chlorobium vibrioforme subsp. thiosulfatophilum).